The primary structure comprises 206 residues: Probable N-acetyltransferase 14 (206 aa).

The region spanning 55-206 (LRFVLASFAL…TLVREFSKDL (152 aa)) is the N-acetyltransferase domain. The chain crosses the membrane as a helical span at residues 57–77 (FVLASFALALLLPVFLAVTAV).

It belongs to the camello family.

Its subcellular location is the membrane. Its function is as follows. Probable acetyltransferase. Functionally, may act as a transcription factor regulating the expression of coproporphyrinogen oxidase by binding to a promoter regulatory element. This Macaca fascicularis (Crab-eating macaque) protein is Probable N-acetyltransferase 14 (NAT14).